The primary structure comprises 185 residues: Ribosome-recycling factor (185 aa).

Belongs to the RRF family.

The protein resides in the cytoplasm. Functionally, responsible for the release of ribosomes from messenger RNA at the termination of protein biosynthesis. May increase the efficiency of translation by recycling ribosomes from one round of translation to another. The sequence is that of Ribosome-recycling factor from Clostridium perfringens (strain ATCC 13124 / DSM 756 / JCM 1290 / NCIMB 6125 / NCTC 8237 / Type A).